Here is a 506-residue protein sequence, read N- to C-terminus: Protein NEN3 (506 aa).

An Exonuclease domain is found at 15-176 (FFDLETAVPT…LDDVRMNLEV (162 aa)). 2 residues coordinate Mg(2+): aspartate 17 and glutamate 19. Histidine 164 functions as the Proton donor/acceptor in the catalytic mechanism. Aspartate 169 contacts Mg(2+). Disordered stretches follow at residues 204–240 (KSPR…SSVD) and 289–313 (AEEA…KDES). Residues 222–238 (SSTSSSSSPKTDPSSSS) are compositionally biased toward low complexity. Residues 290–299 (EEAKTVRQQD) are compositionally biased toward basic and acidic residues.

Mg(2+) serves as cofactor.

Its function is as follows. Probable exonuclease that may be involved in enuclation of sieve elements. This is Protein NEN3 (NEN3) from Arabidopsis thaliana (Mouse-ear cress).